The following is a 504-amino-acid chain: 2-isopropylmalate synthase (504 aa).

Positions 6–267 (IIVFDTTLRD…YTDINFKEIY (262 aa)) constitute a Pyruvate carboxyltransferase domain. Residues Asp15, His201, His203, and Asn237 each contribute to the Mn(2+) site. Residues 391 to 504 (EIIALSSSEC…ALNSYISMKQ (114 aa)) are regulatory domain.

The protein belongs to the alpha-IPM synthase/homocitrate synthase family. LeuA type 1 subfamily. Homodimer. Mn(2+) is required as a cofactor.

The protein localises to the cytoplasm. The enzyme catalyses 3-methyl-2-oxobutanoate + acetyl-CoA + H2O = (2S)-2-isopropylmalate + CoA + H(+). Its pathway is amino-acid biosynthesis; L-leucine biosynthesis; L-leucine from 3-methyl-2-oxobutanoate: step 1/4. Functionally, catalyzes the condensation of the acetyl group of acetyl-CoA with 3-methyl-2-oxobutanoate (2-ketoisovalerate) to form 3-carboxy-3-hydroxy-4-methylpentanoate (2-isopropylmalate). The chain is 2-isopropylmalate synthase from Campylobacter hominis (strain ATCC BAA-381 / DSM 21671 / CCUG 45161 / LMG 19568 / NCTC 13146 / CH001A).